Consider the following 657-residue polypeptide: Endoplasmic reticulum mannosyl-oligosaccharide 1,2-alpha-mannosidase (657 aa).

Topologically, residues 1–49 (MYPPPPAPAPHRDFISVTLSLGESYDNSKSRRRRSCWRKWKQLSRLQRN) are cytoplasmic. The chain crosses the membrane as a helical span at residues 50–70 (VILFVLGFLILCGFLYSLQVS). Residues 71–657 (DQWKALSGSR…AHPLPIWSPA (587 aa)) are Lumenal-facing. Residue serine 101 is modified to Phosphoserine. A disordered region spans residues 118–157 (HLRRGPPHLQIRPPNTVSKDGMQDDAKEREAALGKAQQEE). Residues 138-157 (GMQDDAKEREAALGKAQQEE) are compositionally biased toward basic and acidic residues. The Proton donor role is filled by glutamate 288. The active site involves aspartate 421. The cysteines at positions 485 and 514 are disulfide-linked. Catalysis depends on glutamate 528, which acts as the Proton donor. Glutamate 557 is a catalytic residue. Threonine 646 lines the Ca(2+) pocket.

The protein belongs to the glycosyl hydrolase 47 family. Ca(2+) serves as cofactor.

It localises to the endoplasmic reticulum membrane. It catalyses the reaction N(4)-(alpha-D-Man-(1-&gt;2)-alpha-D-Man-(1-&gt;2)-alpha-D-Man-(1-&gt;3)-[alpha-D-Man-(1-&gt;2)-alpha-D-Man-(1-&gt;3)-[alpha-D-Man-(1-&gt;2)-alpha-D-Man-(1-&gt;6)]-alpha-D-Man-(1-&gt;6)]-beta-D-Man-(1-&gt;4)-beta-D-GlcNAc-(1-&gt;4)-beta-D-GlcNAc)-L-asparaginyl-[protein] (N-glucan mannose isomer 9A1,2,3B1,2,3) + 4 H2O = N(4)-(alpha-D-Man-(1-&gt;3)-[alpha-D-Man-(1-&gt;3)-[alpha-D-Man-(1-&gt;6)]-alpha-D-Man-(1-&gt;6)]-beta-D-Man-(1-&gt;4)-beta-D-GlcNAc-(1-&gt;4)-beta-D-GlcNAc)-L-asparaginyl-[protein] (N-glucan mannose isomer 5A1,2) + 4 beta-D-mannose. The enzyme catalyses N(4)-(alpha-D-Man-(1-&gt;2)-alpha-D-Man-(1-&gt;2)-alpha-D-Man-(1-&gt;3)-[alpha-D-Man-(1-&gt;3)-[alpha-D-Man-(1-&gt;2)-alpha-D-Man-(1-&gt;6)]-alpha-D-Man-(1-&gt;6)]-beta-D-Man-(1-&gt;4)-beta-D-GlcNAc-(1-&gt;4)-beta-D-GlcNAc)-L-asparaginyl-[protein] (N-glucan mannose isomer 8A1,2,3B1,3) + 3 H2O = N(4)-(alpha-D-Man-(1-&gt;3)-[alpha-D-Man-(1-&gt;3)-[alpha-D-Man-(1-&gt;6)]-alpha-D-Man-(1-&gt;6)]-beta-D-Man-(1-&gt;4)-beta-D-GlcNAc-(1-&gt;4)-beta-D-GlcNAc)-L-asparaginyl-[protein] (N-glucan mannose isomer 5A1,2) + 3 beta-D-mannose. It functions in the pathway protein modification; protein glycosylation. Functionally, involved in glycoprotein quality control targeting of misfolded glycoproteins for degradation. It primarily trims a single alpha-1,2-linked mannose residue from Man(9)GlcNAc(2) to produce Man(8)GlcNAc(2), but at high enzyme concentrations, as found in the ER quality control compartment (ERQC), it further trims the carbohydrates to Man(5-6)GlcNAc(2). In Rattus norvegicus (Rat), this protein is Endoplasmic reticulum mannosyl-oligosaccharide 1,2-alpha-mannosidase (Man1b1).